A 433-amino-acid polypeptide reads, in one-letter code: tRNA-2-methylthio-N(6)-dimethylallyladenosine synthase (433 aa).

One can recognise an MTTase N-terminal domain in the interval 3 to 118; sequence KKLFIQTLGC…ISRVIHQEKA (116 aa). Positions 12, 49, 81, 150, 154, and 157 each coordinate [4Fe-4S] cluster. Residues 136-369 enclose the Radical SAM core domain; that stretch reads SRNDYKAMVN…QARHKEILEE (234 aa). The TRAM domain occupies 372 to 433; that stretch reads QKEVGAIHSV…YRAFLIGEPL (62 aa).

It belongs to the methylthiotransferase family. MiaB subfamily. As to quaternary structure, monomer. It depends on [4Fe-4S] cluster as a cofactor.

Its subcellular location is the cytoplasm. It catalyses the reaction N(6)-dimethylallyladenosine(37) in tRNA + (sulfur carrier)-SH + AH2 + 2 S-adenosyl-L-methionine = 2-methylsulfanyl-N(6)-dimethylallyladenosine(37) in tRNA + (sulfur carrier)-H + 5'-deoxyadenosine + L-methionine + A + S-adenosyl-L-homocysteine + 2 H(+). Functionally, catalyzes the methylthiolation of N6-(dimethylallyl)adenosine (i(6)A), leading to the formation of 2-methylthio-N6-(dimethylallyl)adenosine (ms(2)i(6)A) at position 37 in tRNAs that read codons beginning with uridine. The polypeptide is tRNA-2-methylthio-N(6)-dimethylallyladenosine synthase (Wolinella succinogenes (strain ATCC 29543 / DSM 1740 / CCUG 13145 / JCM 31913 / LMG 7466 / NCTC 11488 / FDC 602W) (Vibrio succinogenes)).